A 757-amino-acid chain; its full sequence is Primary amine oxidase (757 aa).

An N-terminal signal peptide occupies residues 1-30; sequence MGSPSLYSARKTTLALAVALSFAWQAPVFA. Substrate is bound by residues 411–422 and 493–498; these read YLDSGDYGMGTL and VGNYDY. The active-site Proton acceptor is Asp413. The Schiff-base intermediate with substrate; via topaquinone role is filled by Tyr496. A 2',4',5'-topaquinone modification is found at Tyr496. The Cu cation site is built by His554 and His556. Ca(2+)-binding residues include Asp563, Leu564, Asp565, Glu603, Tyr697, Asp700, Glu702, Asp708, and Ala709. Residue Asp563 participates in Mn(2+) binding. Residue Asp565 participates in Mn(2+) binding. Residues 680 to 701 form a disordered region; the sequence is PEGKYPNRSTHDTGLGQYSKDN. A Mn(2+)-binding site is contributed by Asp708. His719 is a Cu cation binding site.

This sequence belongs to the copper/topaquinone oxidase family. Homodimer. The cofactor is Cu cation. Zn(2+) serves as cofactor. Requires Ca(2+) as cofactor. It depends on L-topaquinone as a cofactor. Mn(2+) is required as a cofactor. In terms of processing, topaquinone (TPQ) is generated by copper-dependent autoxidation of a specific tyrosyl residue.

The protein localises to the periplasm. The catalysed reaction is a primary methyl amine + O2 + H2O = an aldehyde + H2O2 + NH4(+). It catalyses the reaction 2-phenylethylamine + O2 + H2O = 2-phenylacetaldehyde + H2O2 + NH4(+). Its pathway is amino-acid degradation; L-phenylalanine degradation; phenylacetate from L-phenylalanine: step 2/3. Its activity is regulated as follows. Inhibited by 2-hydrazinopyridine. In terms of biological role, the enzyme prefers aromatic over aliphatic amines. In Escherichia coli (strain K12), this protein is Primary amine oxidase (tynA).